Here is a 361-residue protein sequence, read N- to C-terminus: 3-dehydroquinate synthase (361 aa).

Residues 104–108 (GVIGD), 128–129 (TT), Lys-140, and Lys-149 each bind NAD(+). Zn(2+)-binding residues include Glu-182, His-245, and His-262.

The protein belongs to the sugar phosphate cyclases superfamily. Dehydroquinate synthase family. NAD(+) is required as a cofactor. Requires Co(2+) as cofactor. It depends on Zn(2+) as a cofactor.

It localises to the cytoplasm. The catalysed reaction is 7-phospho-2-dehydro-3-deoxy-D-arabino-heptonate = 3-dehydroquinate + phosphate. Its pathway is metabolic intermediate biosynthesis; chorismate biosynthesis; chorismate from D-erythrose 4-phosphate and phosphoenolpyruvate: step 2/7. Catalyzes the conversion of 3-deoxy-D-arabino-heptulosonate 7-phosphate (DAHP) to dehydroquinate (DHQ). The protein is 3-dehydroquinate synthase of Halalkalibacterium halodurans (strain ATCC BAA-125 / DSM 18197 / FERM 7344 / JCM 9153 / C-125) (Bacillus halodurans).